Here is a 226-residue protein sequence, read N- to C-terminus: ATP-dependent dethiobiotin synthetase BioD (226 aa).

ATP is bound at residue G12–V17. T16 lines the Mg(2+) pocket. K37 is an active-site residue. Residue T41 participates in substrate binding. ATP contacts are provided by residues D49, E108–G111, G169–S170, and P197–G199. Mg(2+) is bound by residues D49 and E108.

It belongs to the dethiobiotin synthetase family. In terms of assembly, homodimer. Mg(2+) is required as a cofactor.

It localises to the cytoplasm. It carries out the reaction (7R,8S)-7,8-diammoniononanoate + CO2 + ATP = (4R,5S)-dethiobiotin + ADP + phosphate + 3 H(+). It functions in the pathway cofactor biosynthesis; biotin biosynthesis; biotin from 7,8-diaminononanoate: step 1/2. Its function is as follows. Catalyzes a mechanistically unusual reaction, the ATP-dependent insertion of CO2 between the N7 and N8 nitrogen atoms of 7,8-diaminopelargonic acid (DAPA, also called 7,8-diammoniononanoate) to form a ureido ring. The sequence is that of ATP-dependent dethiobiotin synthetase BioD from Mycobacterium bovis (strain ATCC BAA-935 / AF2122/97).